The sequence spans 176 residues: ATP-dependent protease subunit HslV (176 aa).

Residue Thr5 is part of the active site. Residues Gly161, Cys164, and Thr167 each coordinate Na(+).

Belongs to the peptidase T1B family. HslV subfamily. In terms of assembly, a double ring-shaped homohexamer of HslV is capped on each side by a ring-shaped HslU homohexamer. The assembly of the HslU/HslV complex is dependent on binding of ATP.

It is found in the cytoplasm. It carries out the reaction ATP-dependent cleavage of peptide bonds with broad specificity.. With respect to regulation, allosterically activated by HslU binding. Its function is as follows. Protease subunit of a proteasome-like degradation complex believed to be a general protein degrading machinery. The chain is ATP-dependent protease subunit HslV from Wolinella succinogenes (strain ATCC 29543 / DSM 1740 / CCUG 13145 / JCM 31913 / LMG 7466 / NCTC 11488 / FDC 602W) (Vibrio succinogenes).